Consider the following 702-residue polypeptide: Rho GTPase-activating protein 22 (702 aa).

A PH domain is found at 43–151 (PVLKAGWLRK…WVQAIRRVIW (109 aa)). The Rho-GAP domain maps to 161 to 355 (QRLEDTVHHE…VLIRKHGQLF (195 aa)). Disordered stretches follow at residues 360–433 (LEEP…HTLP), 438–457 (SFRQ…SSLE), 480–511 (RASS…FSST), and 555–596 (PSPL…TQAH). A phosphoserine mark is found at Ser365 and Ser397. Composition is skewed to polar residues over residues 407–421 (SRTS…TGPA), 438–456 (SFRQ…NSSL), 491–504 (GSAQ…NVPP), and 581–594 (SGSS…SPTQ). Residues 594–691 (QAHVRRCRAL…EEFFSTLGSL (98 aa)) are a coiled coil.

Interacts with VEZF1. As to expression, predominantly present in endothelial cells (at protein level).

Its subcellular location is the cytoplasm. The protein resides in the nucleus. In terms of biological role, rho GTPase-activating protein involved in the signal transduction pathway that regulates endothelial cell capillary tube formation during angiogenesis. Acts as a GTPase activator for the RAC1 by converting it to an inactive GDP-bound state. Inhibits RAC1-dependent lamellipodia formation. May also play a role in transcription regulation via its interaction with VEZF1, by regulating activity of the endothelin-1 (EDN1) promoter. The protein is Rho GTPase-activating protein 22 (Arhgap22) of Mus musculus (Mouse).